A 203-amino-acid polypeptide reads, in one-letter code: Translation initiation factor IF-3 (203 aa).

A compositionally biased stretch (basic and acidic residues) spans 172–182 (EAPKNEKKTKE). The segment at 172 to 203 (EAPKNEKKTKENNPPFNRINLMKGENHAKNED) is disordered.

Belongs to the IF-3 family. As to quaternary structure, monomer.

The protein localises to the cytoplasm. Functionally, IF-3 binds to the 30S ribosomal subunit and shifts the equilibrium between 70S ribosomes and their 50S and 30S subunits in favor of the free subunits, thus enhancing the availability of 30S subunits on which protein synthesis initiation begins. In Helicobacter pylori (strain J99 / ATCC 700824) (Campylobacter pylori J99), this protein is Translation initiation factor IF-3.